The sequence spans 227 residues: Cytidylate kinase (227 aa).

Glycine 12–threonine 20 lines the ATP pocket.

Belongs to the cytidylate kinase family. Type 1 subfamily.

Its subcellular location is the cytoplasm. The catalysed reaction is CMP + ATP = CDP + ADP. The enzyme catalyses dCMP + ATP = dCDP + ADP. The sequence is that of Cytidylate kinase from Nitrosococcus oceani (strain ATCC 19707 / BCRC 17464 / JCM 30415 / NCIMB 11848 / C-107).